Consider the following 651-residue polypeptide: Threonine--tRNA ligase (651 aa).

Residues 1-64 (MSSVVHVTLP…EKDCTLQVLT (64 aa)) form the TGS domain. The interval 245–535 (DHRRLGPELG…LTEHYAGNFP (291 aa)) is catalytic. 3 residues coordinate Zn(2+): Cys336, His387, and His512.

This sequence belongs to the class-II aminoacyl-tRNA synthetase family. As to quaternary structure, homodimer. It depends on Zn(2+) as a cofactor.

The protein resides in the cytoplasm. It carries out the reaction tRNA(Thr) + L-threonine + ATP = L-threonyl-tRNA(Thr) + AMP + diphosphate + H(+). Its function is as follows. Catalyzes the attachment of threonine to tRNA(Thr) in a two-step reaction: L-threonine is first activated by ATP to form Thr-AMP and then transferred to the acceptor end of tRNA(Thr). Also edits incorrectly charged L-seryl-tRNA(Thr). This chain is Threonine--tRNA ligase, found in Symbiobacterium thermophilum (strain DSM 24528 / JCM 14929 / IAM 14863 / T).